The chain runs to 482 residues: tRNA sulfurtransferase (482 aa).

The region spanning 61–165 is the THUMP domain; that stretch reads DQILAILMQT…YDHLHQVLHR (105 aa). ATP is bound by residues 183–184, Lys-265, Gly-287, and Gln-296; that span reads LI. Cys-344 and Cys-456 form a disulfide bridge. Residues 404-482 enclose the Rhodanese domain; sequence IGDGAIVLDI…GYGNIKVYRP (79 aa). Catalysis depends on Cys-456, which acts as the Cysteine persulfide intermediate.

This sequence belongs to the ThiI family.

The protein localises to the cytoplasm. It catalyses the reaction [ThiI sulfur-carrier protein]-S-sulfanyl-L-cysteine + a uridine in tRNA + 2 reduced [2Fe-2S]-[ferredoxin] + ATP + H(+) = [ThiI sulfur-carrier protein]-L-cysteine + a 4-thiouridine in tRNA + 2 oxidized [2Fe-2S]-[ferredoxin] + AMP + diphosphate. It carries out the reaction [ThiS sulfur-carrier protein]-C-terminal Gly-Gly-AMP + S-sulfanyl-L-cysteinyl-[cysteine desulfurase] + AH2 = [ThiS sulfur-carrier protein]-C-terminal-Gly-aminoethanethioate + L-cysteinyl-[cysteine desulfurase] + A + AMP + 2 H(+). It functions in the pathway cofactor biosynthesis; thiamine diphosphate biosynthesis. Catalyzes the ATP-dependent transfer of a sulfur to tRNA to produce 4-thiouridine in position 8 of tRNAs, which functions as a near-UV photosensor. Also catalyzes the transfer of sulfur to the sulfur carrier protein ThiS, forming ThiS-thiocarboxylate. This is a step in the synthesis of thiazole, in the thiamine biosynthesis pathway. The sulfur is donated as persulfide by IscS. In Photobacterium profundum (strain SS9), this protein is tRNA sulfurtransferase.